Here is a 427-residue protein sequence, read N- to C-terminus: Serine--tRNA ligase (427 aa).

231–233 (TAE) serves as a coordination point for L-serine. An ATP-binding site is contributed by 262–264 (RSE). L-serine is bound at residue glutamate 285. 349–352 (EISS) provides a ligand contact to ATP. An L-serine-binding site is contributed by serine 385.

Belongs to the class-II aminoacyl-tRNA synthetase family. Type-1 seryl-tRNA synthetase subfamily. In terms of assembly, homodimer. The tRNA molecule binds across the dimer.

It localises to the cytoplasm. It carries out the reaction tRNA(Ser) + L-serine + ATP = L-seryl-tRNA(Ser) + AMP + diphosphate + H(+). The enzyme catalyses tRNA(Sec) + L-serine + ATP = L-seryl-tRNA(Sec) + AMP + diphosphate + H(+). It functions in the pathway aminoacyl-tRNA biosynthesis; selenocysteinyl-tRNA(Sec) biosynthesis; L-seryl-tRNA(Sec) from L-serine and tRNA(Sec): step 1/1. In terms of biological role, catalyzes the attachment of serine to tRNA(Ser). Is also able to aminoacylate tRNA(Sec) with serine, to form the misacylated tRNA L-seryl-tRNA(Sec), which will be further converted into selenocysteinyl-tRNA(Sec). The sequence is that of Serine--tRNA ligase from Methylococcus capsulatus (strain ATCC 33009 / NCIMB 11132 / Bath).